The chain runs to 344 residues: Arginine N-succinyltransferase (344 aa).

Succinyl-CoA is bound at residue Leu-125. His-229 (proton donor) is an active-site residue.

Belongs to the arginine N-succinyltransferase family.

The catalysed reaction is succinyl-CoA + L-arginine = N(2)-succinyl-L-arginine + CoA + H(+). It participates in amino-acid degradation; L-arginine degradation via AST pathway; L-glutamate and succinate from L-arginine: step 1/5. Catalyzes the transfer of succinyl-CoA to arginine to produce N(2)-succinylarginine. This is Arginine N-succinyltransferase from Shigella flexneri.